The chain runs to 597 residues: Histidine protein kinase DivJ (597 aa).

6 consecutive transmembrane segments (helical) span residues 40-57 (LGWLAAVCLAAAAALFTA), 62-81 (WPVWAALGAGALPALVSLIF), 91-109 (WLLVLWAVGGSLAAVLTGG), 110-125 (VGGAMAAWCLAPVAAA), 137-158 (GAALALIGACVAALTQLSGLAP), and 159-188 (AAPTGPLAFVLGFLALVTTGLGLAAGLLIG). Residues 335 to 553 (NMSHELRTPL…TVSVRLPVLL (219 aa)) form the Histidine kinase domain. A Phosphohistidine; by autocatalysis modification is found at H338. The segment covering 561–585 (PTPPAAPEAPSAPEPAPTVEEPPPA) has biased composition (pro residues). A disordered region spans residues 561–597 (PTPPAAPEAPSAPEPAPTVEEPPPASLGDNVIAFAPR).

The protein resides in the cell membrane. The catalysed reaction is ATP + protein L-histidine = ADP + protein N-phospho-L-histidine.. Kinase required for the regulation of cell division and differentiation. Is part of a signal transduction pathway, activating PleD by phosphorylation. This chain is Histidine protein kinase DivJ (divJ), found in Caulobacter vibrioides (strain ATCC 19089 / CIP 103742 / CB 15) (Caulobacter crescentus).